Here is a 453-residue protein sequence, read N- to C-terminus: Ribulose bisphosphate carboxylase large chain (453 aa).

Residues 1-2 (MS) constitute a propeptide that is removed on maturation. Pro-3 carries the post-translational modification N-acetylproline. Lys-14 carries the post-translational modification N6,N6,N6-trimethyllysine. Asn-123 and Thr-173 together coordinate substrate. Lys-175 functions as the Proton acceptor in the catalytic mechanism. Lys-177 is a substrate binding site. Mg(2+) is bound by residues Lys-201, Asp-203, and Glu-204. Lys-201 bears the N6-carboxylysine mark. Residue His-294 is the Proton acceptor of the active site. Residues Arg-295, His-327, and Ser-379 each contribute to the substrate site.

This sequence belongs to the RuBisCO large chain family. Type I subfamily. As to quaternary structure, heterohexadecamer of 8 large chains and 8 small chains; disulfide-linked. The disulfide link is formed within the large subunit homodimers. Mg(2+) serves as cofactor. The disulfide bond which can form in the large chain dimeric partners within the hexadecamer appears to be associated with oxidative stress and protein turnover.

It localises to the plastid. Its subcellular location is the chloroplast. It carries out the reaction 2 (2R)-3-phosphoglycerate + 2 H(+) = D-ribulose 1,5-bisphosphate + CO2 + H2O. The catalysed reaction is D-ribulose 1,5-bisphosphate + O2 = 2-phosphoglycolate + (2R)-3-phosphoglycerate + 2 H(+). RuBisCO catalyzes two reactions: the carboxylation of D-ribulose 1,5-bisphosphate, the primary event in carbon dioxide fixation, as well as the oxidative fragmentation of the pentose substrate in the photorespiration process. Both reactions occur simultaneously and in competition at the same active site. In Valantia muralis (Wall valantia), this protein is Ribulose bisphosphate carboxylase large chain.